We begin with the raw amino-acid sequence, 122 residues long: Large ribosomal subunit protein uL14 (122 aa).

The protein belongs to the universal ribosomal protein uL14 family. In terms of assembly, part of the 50S ribosomal subunit. Forms a cluster with proteins L3 and L19. In the 70S ribosome, L14 and L19 interact and together make contacts with the 16S rRNA in bridges B5 and B8.

Functionally, binds to 23S rRNA. Forms part of two intersubunit bridges in the 70S ribosome. The polypeptide is Large ribosomal subunit protein uL14 (Hyphomonas neptunium (strain ATCC 15444)).